The sequence spans 136 residues: Urease subunit beta (136 aa).

The interval 113 to 136 (NDEYAGVFGDNGAENVNKKGGKRS) is disordered.

The protein belongs to the urease beta subunit family. In terms of assembly, heterotrimer of UreA (gamma), UreB (beta) and UreC (alpha) subunits. Three heterotrimers associate to form the active enzyme.

The protein localises to the cytoplasm. The enzyme catalyses urea + 2 H2O + H(+) = hydrogencarbonate + 2 NH4(+). It functions in the pathway nitrogen metabolism; urea degradation; CO(2) and NH(3) from urea (urease route): step 1/1. In Staphylococcus aureus (strain USA300), this protein is Urease subunit beta.